Consider the following 237-residue polypeptide: Uridylate kinase (237 aa).

11-14 (KLSG) provides a ligand contact to ATP. Gly52 serves as a coordination point for UMP. 2 residues coordinate ATP: Gly53 and Arg57. UMP is bound by residues Asp72 and 134-141 (TGYSYFTT). Asn162, Tyr168, and Asp171 together coordinate ATP.

It belongs to the UMP kinase family. As to quaternary structure, homohexamer.

Its subcellular location is the cytoplasm. The enzyme catalyses UMP + ATP = UDP + ADP. Its pathway is pyrimidine metabolism; CTP biosynthesis via de novo pathway; UDP from UMP (UMPK route): step 1/1. With respect to regulation, inhibited by UTP. Catalyzes the reversible phosphorylation of UMP to UDP. This is Uridylate kinase from Mycoplasma capricolum subsp. capricolum (strain California kid / ATCC 27343 / NCTC 10154).